A 704-amino-acid polypeptide reads, in one-letter code: Elongation factor G (704 aa).

The tr-type G domain occupies 10 to 290; sequence NKVRNIGIMA…AVIDYLPSPL (281 aa). GTP contacts are provided by residues 19 to 26, 83 to 87, and 137 to 140; these read AHIDAGKT, DTPGH, and NKMD.

It belongs to the TRAFAC class translation factor GTPase superfamily. Classic translation factor GTPase family. EF-G/EF-2 subfamily.

The protein localises to the cytoplasm. Catalyzes the GTP-dependent ribosomal translocation step during translation elongation. During this step, the ribosome changes from the pre-translocational (PRE) to the post-translocational (POST) state as the newly formed A-site-bound peptidyl-tRNA and P-site-bound deacylated tRNA move to the P and E sites, respectively. Catalyzes the coordinated movement of the two tRNA molecules, the mRNA and conformational changes in the ribosome. The polypeptide is Elongation factor G (Clavibacter sepedonicus (Clavibacter michiganensis subsp. sepedonicus)).